Reading from the N-terminus, the 792-residue chain is Phenylalanine--tRNA ligase beta subunit (792 aa).

Positions 39–147 (ARTLEKVVVG…ADAPIGKNIQ (109 aa)) constitute a tRNA-binding domain. Positions 400–475 (PKIPRIILRP…HLYGYDRIPQ (76 aa)) constitute a B5 domain. Positions 453, 459, 462, and 463 each coordinate Mg(2+). The FDX-ACB domain maps to 697–791 (SKFPSIRRDI…LERKFNAKLR (95 aa)).

It belongs to the phenylalanyl-tRNA synthetase beta subunit family. Type 1 subfamily. Tetramer of two alpha and two beta subunits. Mg(2+) serves as cofactor.

The protein resides in the cytoplasm. It carries out the reaction tRNA(Phe) + L-phenylalanine + ATP = L-phenylalanyl-tRNA(Phe) + AMP + diphosphate + H(+). In Coxiella burnetii (strain RSA 493 / Nine Mile phase I), this protein is Phenylalanine--tRNA ligase beta subunit.